The following is a 257-amino-acid chain: Thiazole synthase (257 aa).

K98 functions as the Schiff-base intermediate with DXP in the catalytic mechanism. 1-deoxy-D-xylulose 5-phosphate is bound by residues G159, 185–186 (AG), and 207–208 (NT).

The protein belongs to the ThiG family. As to quaternary structure, homotetramer. Forms heterodimers with either ThiH or ThiS.

Its subcellular location is the cytoplasm. It catalyses the reaction [ThiS sulfur-carrier protein]-C-terminal-Gly-aminoethanethioate + 2-iminoacetate + 1-deoxy-D-xylulose 5-phosphate = [ThiS sulfur-carrier protein]-C-terminal Gly-Gly + 2-[(2R,5Z)-2-carboxy-4-methylthiazol-5(2H)-ylidene]ethyl phosphate + 2 H2O + H(+). It functions in the pathway cofactor biosynthesis; thiamine diphosphate biosynthesis. Catalyzes the rearrangement of 1-deoxy-D-xylulose 5-phosphate (DXP) to produce the thiazole phosphate moiety of thiamine. Sulfur is provided by the thiocarboxylate moiety of the carrier protein ThiS. In vitro, sulfur can be provided by H(2)S. This Anaeromyxobacter dehalogenans (strain 2CP-1 / ATCC BAA-258) protein is Thiazole synthase.